Here is a 256-residue protein sequence, read N- to C-terminus: Calsenilin (256 aa).

Positions M1–G20 are disordered. A Phosphoserine modification is found at S14. K26 participates in a covalent cross-link: Glycyl lysine isopeptide (Lys-Gly) (interchain with G-Cter in SUMO1). S-palmitoyl cysteine attachment occurs at residues C45 and C46. S60 carries the phosphoserine modification. Position 63 is a phosphoserine; by CK1 (S63). Residues L67–P123 form the EF-hand 1; degenerate domain. A Glycyl lysine isopeptide (Lys-Gly) (interchain with G-Cter in SUMO1) cross-link involves residue K90. EF-hand domains are found at residues D126–G161, T162–M197, and A210–I245. Ca(2+) contacts are provided by D175, N177, D179, Y181, E186, D223, N225, D227, and E234. The interval E243–I256 is interaction with KCND2.

It belongs to the recoverin family. Binds to DNA as a homomultimer. Dimerization is induced by binding to calcium. Interacts with the C-terminus of PSEN1 and PSEN2 and with PSEN2 CTF subunit. Associates with KCN1. Component of heteromultimeric potassium channels. Identified in potassium channel complexes containing KCND1, KCND2, KCND3, KCNIP1, KCNIP2, KCNIP3, KCNIP4, DPP6 and DPP10. Interacts with KCND2 and KCND3. In terms of processing, palmitoylated. Palmitoylation enhances association with the plasma membrane. Post-translationally, proteolytically cleaved by caspase-3. Phosphorylation at Ser-63 inhibits cleavage by CASP3. In terms of tissue distribution, highly expressed in brain. Widely expressed at lower levels. Expression levels are elevated in brain cortex regions affected by Alzheimer disease.

The protein localises to the cytoplasm. It localises to the cell membrane. Its subcellular location is the endoplasmic reticulum. It is found in the golgi apparatus. The protein resides in the nucleus. Calcium-dependent transcriptional repressor that binds to the DRE element of genes including PDYN and FOS. Affinity for DNA is reduced upon binding to calcium and enhanced by binding to magnesium. Seems to be involved in nociception. In terms of biological role, regulatory subunit of Kv4/D (Shal)-type voltage-gated rapidly inactivating A-type potassium channels, such as KCND2/Kv4.2 and KCND3/Kv4.3. Modulates channel expression at the cell membrane, gating characteristics, inactivation kinetics and rate of recovery from inactivation in a calcium-dependent and isoform-specific manner. Its function is as follows. May play a role in the regulation of PSEN2 proteolytic processing and apoptosis. Together with PSEN2 involved in modulation of amyloid-beta formation. This Homo sapiens (Human) protein is Calsenilin (KCNIP3).